We begin with the raw amino-acid sequence, 1034 residues long: Probable outer membrane protein PmpF (1034 aa).

A signal peptide spans 1 to 25 (MIKRTSLSFACLSFFYLSTISILQA). Composition is skewed to low complexity over residues 664 to 673 (SAPTSATSIA) and 680 to 709 (ETFT…ASNS). A disordered region spans residues 664–709 (SAPTSATSIAEQKKTSETFTPSNTTTASIPNIKASAGSGSGSASNS). In terms of domain architecture, Autotransporter spans 755–1034 (RSLLPDNSWF…YINAGGALVF (280 aa)).

Belongs to the PMP outer membrane protein family.

It localises to the secreted. It is found in the cell wall. The protein localises to the cell outer membrane. In Chlamydia trachomatis serovar D (strain ATCC VR-885 / DSM 19411 / UW-3/Cx), this protein is Probable outer membrane protein PmpF (pmpF).